The chain runs to 807 residues: Mechanosensitive cation channel TMEM63A (807 aa).

Over 1-51 (MMDSPFLELWQSKAVSIREQLGLGDRPNDSYCYNSAKNSTVLQGVTFGGIP) the chain is Extracellular. Asn38 carries N-linked (GlcNAc...) asparagine glycosylation. The chain crosses the membrane as a helical span at residues 52-74 (TVLLIDVSCFLFLILVFSIIRRR). The Cytoplasmic segment spans residues 75 to 134 (FWDYGRIALVSEADSESRFQRLSSTSSSGQQDFENELGCCPWLTAIFRLHDDQILEWCGE). Residues 135–167 (DAIHYLSFQRHIIFLLVVVSFLSLCVILPVNLS) form a helical membrane-spanning segment. At 168–191 (GDLLDKDPYSFGRTTIANLQTDND) the chain is on the extracellular side. A helical transmembrane segment spans residues 192–217 (LLWLHTIFAVIYLFLTVGFMRHHTQS). At 218–416 (IKYKEENLVR…CWKNLSIQGL (199 aa)) the chain is on the cytoplasmic side. The segment at 219–414 (KYKEENLVRR…DICWKNLSIQ (196 aa)) is intracellular linker IL2; confers mechanosensitivity. A helical membrane pass occupies residues 417–444 (RWWLQWLGINFTLFLGLFFLTTPSIILS). The Extracellular segment spans residues 445–462 (TMDKFNVTKPIHALNNPI). Residue Asn450 is glycosylated (N-linked (GlcNAc...) asparagine). The chain crosses the membrane as a helical span at residues 463-490 (ISQFFPTLLLWSFSALLPSIVYYSTLLE). The Cytoplasmic portion of the chain corresponds to 491-495 (SHWTK). The helical transmembrane segment at 496 to 532 (SGENQIMMTKVYIFLIFMVLILPSLGLTSLDFFFRWL) threads the bilayer. Topologically, residues 533–554 (FDKTSSEASIRLECVFLPDQGA) are extracellular. The chain crosses the membrane as a helical span at residues 555–586 (FFVNYVIASAFIGNGMELLRLPGLILYTFRMI). Residues 555–586 (FFVNYVIASAFIGNGMELLRLPGLILYTFRMI) form a gating helix region. Residues 587-606 (MAKTAADRRNVKQNQAFQYE) are Cytoplasmic-facing. A helical membrane pass occupies residues 607–624 (FGAMYAWMLCVFTVIVAY). The Extracellular segment spans residues 625 to 628 (SITC). The chain crosses the membrane as a helical span at residues 629 to 651 (PIIAPFGLIYILLKHMVDRHNLY). Topologically, residues 652–661 (FVYLPAKLEK) are cytoplasmic. Residues 662-689 (GIHFAAVNQALAAPILCLFWLYFFSFLR) form a helical membrane-spanning segment. Residues 690-694 (LGMKA) lie on the Extracellular side of the membrane. A helical membrane pass occupies residues 695–709 (PATLFTFLVLLLTIL). Topologically, residues 710 to 807 (VCLAHTCFGC…GSVAAAPQEA (98 aa)) are cytoplasmic. Ser739 bears the Phosphoserine mark.

It belongs to the CSC1 (TC 1.A.17) family. In terms of assembly, monomer. N-Glycosylated.

Its subcellular location is the lysosome membrane. It localises to the early endosome membrane. The protein resides in the cell membrane. It carries out the reaction Ca(2+)(in) = Ca(2+)(out). Mechanosensitive cation channel with low conductance and high activation threshold. In contrast to TMEM63B, does not show phospholipid scramblase activity. Acts as a regulator of lysosomal morphology by mediating lysosomal mechanosensitivity. Important for the baby's first breath and respiration throughout life. Upon lung inflation conducts cation currents in alveolar type 1 and 2 cells triggering lamellar body exocytosis and surfactant secretion into airspace. Also acts as an osmosensitive cation channel preferentially activated by hypotonic stress. In Homo sapiens (Human), this protein is Mechanosensitive cation channel TMEM63A.